Here is a 296-residue protein sequence, read N- to C-terminus: 4-hydroxybenzoate octaprenyltransferase (296 aa).

Transmembrane regions (helical) follow at residues 28-48 (IGTLLLLWPTYWALWLASDGI), 51-71 (LAVLAAFTIGTFLMRSAGCVI), 102-122 (LLLTAFLCLLAALCLIPLNHL), 143-163 (FFPIPQLYLGLAFSFGIPMAF), 174-194 (AWILFTANVLWTLAYDTVYAM), 212-232 (FGRYDIAAVMLCHGGFTLLMA), 233-253 (VLGAVIGAAWAYWTAIPIVLL), and 274-294 (FLANNRIGWVWFTAIFAHTFF).

It belongs to the UbiA prenyltransferase family. It depends on Mg(2+) as a cofactor.

It is found in the cell inner membrane. It carries out the reaction all-trans-octaprenyl diphosphate + 4-hydroxybenzoate = 4-hydroxy-3-(all-trans-octaprenyl)benzoate + diphosphate. It functions in the pathway cofactor biosynthesis; ubiquinone biosynthesis. Its function is as follows. Catalyzes the prenylation of para-hydroxybenzoate (PHB) with an all-trans polyprenyl group. Mediates the second step in the final reaction sequence of ubiquinone-8 (UQ-8) biosynthesis, which is the condensation of the polyisoprenoid side chain with PHB, generating the first membrane-bound Q intermediate 3-octaprenyl-4-hydroxybenzoate. In Neisseria meningitidis serogroup C (strain 053442), this protein is 4-hydroxybenzoate octaprenyltransferase.